We begin with the raw amino-acid sequence, 42 residues long: Photosystem II reaction center protein J (42 aa).

The chain crosses the membrane as a helical span at residues I10–F30.

The protein belongs to the PsbJ family. In terms of assembly, PSII is composed of 1 copy each of membrane proteins PsbA, PsbB, PsbC, PsbD, PsbE, PsbF, PsbH, PsbI, PsbJ, PsbK, PsbL, PsbM, PsbT, PsbX, PsbY, PsbZ, Psb30/Ycf12, at least 3 peripheral proteins of the oxygen-evolving complex and a large number of cofactors. It forms dimeric complexes.

The protein localises to the plastid. It localises to the chloroplast thylakoid membrane. Its function is as follows. One of the components of the core complex of photosystem II (PSII). PSII is a light-driven water:plastoquinone oxidoreductase that uses light energy to abstract electrons from H(2)O, generating O(2) and a proton gradient subsequently used for ATP formation. It consists of a core antenna complex that captures photons, and an electron transfer chain that converts photonic excitation into a charge separation. This Chara vulgaris (Common stonewort) protein is Photosystem II reaction center protein J.